Consider the following 325-residue polypeptide: 26S proteasome non-ATPase regulatory subunit 7 (325 aa).

The MPN domain maps to 8 to 142; that stretch reads TIVHPTVLLS…TKSYVTVEEI (135 aa). The tract at residues 285–325 is disordered; the sequence is KKADIINSTPPTTATSPSVADKGKEKEQNAFNGADKPSKQA. Positions 292–302 are enriched in low complexity; the sequence is STPPTTATSPS.

Belongs to the peptidase M67A family.

Functionally, acts as a regulatory subunit of the 26S proteasome which is involved in the ATP-dependent degradation of ubiquitinated proteins. This Dictyostelium discoideum (Social amoeba) protein is 26S proteasome non-ATPase regulatory subunit 7 (psmD7).